We begin with the raw amino-acid sequence, 495 residues long: DNA double-strand break repair helicase HerA (495 aa).

ATP is bound by residues R141, 150–155 (GSGKSN), and 458–459 (KI).

This sequence belongs to the HerA family. In terms of assembly, forms a hexamer or a heptamer. Interacts with Mre11.

The catalysed reaction is Couples ATP hydrolysis with the unwinding of duplex DNA at the replication fork by translocating in the 5'-3' direction. This creates two antiparallel DNA single strands (ssDNA). The leading ssDNA polymer is the template for DNA polymerase III holoenzyme which synthesizes a continuous strand.. The enzyme catalyses ATP + H2O = ADP + phosphate + H(+). It catalyses the reaction Couples ATP hydrolysis with the unwinding of duplex DNA by translocating in the 3'-5' direction.. With respect to regulation, ATPase activity is slightly stimulated by either circular single- or double-stranded (ds)DNA with a weak preference for dsDNA. Helicase activity is stimulated by Mre11. Involved in DNA double-strand break (DSB) repair. Probably acts with NurA to stimulate resection of the 5' strand and produce the long 3' single-strand that is required for RadA loading. Has DNA-dependent ATPase activity and bidirectional DNA helicase activity. Loads on either a 3' or a 5' DNA tail for subsequent DNA unwinding. Can also unwind blunt-ended dsDNA, Holliday junction and splayed-arm DNA. The polypeptide is DNA double-strand break repair helicase HerA (Sulfurisphaera tokodaii (strain DSM 16993 / JCM 10545 / NBRC 100140 / 7) (Sulfolobus tokodaii)).